A 337-amino-acid chain; its full sequence is Glyceraldehyde-3-phosphate dehydrogenase (337 aa).

Residues 12–13, Asp-34, and Lys-79 each bind NAD(+); that span reads RI. D-glyceraldehyde 3-phosphate-binding positions include 150–152, Thr-181, 210–211, and Arg-233; these read SCT and TG. Cys-151 functions as the Nucleophile in the catalytic mechanism. NAD(+) is bound at residue Asn-315.

The protein belongs to the glyceraldehyde-3-phosphate dehydrogenase family. In terms of assembly, homotetramer.

The protein localises to the cytoplasm. The enzyme catalyses D-glyceraldehyde 3-phosphate + phosphate + NAD(+) = (2R)-3-phospho-glyceroyl phosphate + NADH + H(+). The protein operates within carbohydrate degradation; glycolysis; pyruvate from D-glyceraldehyde 3-phosphate: step 1/5. The polypeptide is Glyceraldehyde-3-phosphate dehydrogenase (GPD1) (Phaeosphaeria nodorum (strain SN15 / ATCC MYA-4574 / FGSC 10173) (Glume blotch fungus)).